Reading from the N-terminus, the 1028-residue chain is Contactin-3 (1028 aa).

Positions 1–19 are cleaved as a signal peptide; the sequence is MMFPWKQLILLSFIGCLGG. Ig-like C2-type domains are found at residues 26–117, 122–208, 227–313, 318–402, 408–497, and 499–593; these read PVFI…AKLQ, ENFK…ARVL, PKIE…GRLT, PHWV…AELK, PDFS…LVVT, and PTRI…ADLI. Disulfide bonds link C50/C100, C144/C196, C249/C297, C339/C386, and C431/C479. N-linked (GlcNAc...) asparagine glycans are attached at residues N65 and N193. Residues N375, N468, and N489 are each glycosylated (N-linked (GlcNAc...) asparagine). A disulfide bond links C521 and C577. 4 consecutive Fibronectin type-III domains span residues 600–698, 703–800, 805–901, and 902–998; these read PPEN…TEEA, PPSE…SAEE, APSQ…TKKT, and PPSQ…TSMD. The interval 684–713 is disordered; it reads GEPSLPSEKVRTEEAVPEVPPSEVNGGGGS. N765, N860, N895, N913, N931, and N956 each carry an N-linked (GlcNAc...) asparagine glycan. S1002 carries the GPI-anchor amidated serine lipid modification. The propeptide at 1003–1028 is removed in mature form; it reads TSAISNVHPMSSYMPIVLFLIVYVLW.

This sequence belongs to the immunoglobulin superfamily. Contactin family. As to quaternary structure, interacts with PTPRG. In brain, it is expressed in frontal lobe, occipital lobe, cerebellum and amygdala.

The protein localises to the cell membrane. Contactins mediate cell surface interactions during nervous system development. Has some neurite outgrowth-promoting activity. The polypeptide is Contactin-3 (CNTN3) (Homo sapiens (Human)).